The sequence spans 454 residues: Photosystem II CP47 reaction center protein (454 aa).

Transmembrane regions (helical) follow at residues 6-26 (MFVL…GWTI), 47-61 (IILS…IWHW), 86-102 (GIHL…FGAF), 149-164 (IAAG…FHLS), 183-198 (VLSS…AFVV), and 403-418 (SFAL…HGAR).

This sequence belongs to the PsbB/PsbC family. PsbB subfamily. In terms of assembly, PSII is composed of 1 copy each of membrane proteins PsbA, PsbB, PsbC, PsbD, PsbE, PsbF, PsbH, PsbI, PsbJ, PsbK, PsbL, PsbM, PsbT, PsbX, PsbY, PsbZ, Psb30/Ycf12, at least 3 peripheral proteins of the oxygen-evolving complex and a large number of cofactors. It forms dimeric complexes. Binds multiple chlorophylls. PSII binds additional chlorophylls, carotenoids and specific lipids. is required as a cofactor.

The protein resides in the plastid. It localises to the chloroplast thylakoid membrane. Functionally, one of the components of the core complex of photosystem II (PSII). It binds chlorophyll and helps catalyze the primary light-induced photochemical processes of PSII. PSII is a light-driven water:plastoquinone oxidoreductase, using light energy to abstract electrons from H(2)O, generating O(2) and a proton gradient subsequently used for ATP formation. The protein is Photosystem II CP47 reaction center protein of Ostreococcus tauri.